A 431-amino-acid chain; its full sequence is Na(+)-translocating NADH-quinone reductase subunit F (431 aa).

A helical transmembrane segment spans residues 10–30 (IFVASAAFCSLGLILVAVILL). One can recognise a 2Fe-2S ferredoxin-type domain in the interval 41-133 (CKLKINNDDS…DLCLEVEERY (93 aa)). Positions 76, 82, 85, and 117 each coordinate [2Fe-2S] cluster. In terms of domain architecture, FAD-binding FR-type spans 136–286 (ASSWEGTVVS…SGPYGESFMK (151 aa)). Residues 289–413 (NRPVIFLIGG…ALHNSSILTL (125 aa)) are catalytic.

The protein belongs to the NqrF family. In terms of assembly, composed of six subunits; NqrA, NqrB, NqrC, NqrD, NqrE and NqrF. It depends on [2Fe-2S] cluster as a cofactor. The cofactor is FAD.

The protein resides in the cell inner membrane. The enzyme catalyses a ubiquinone + n Na(+)(in) + NADH + H(+) = a ubiquinol + n Na(+)(out) + NAD(+). Its function is as follows. NQR complex catalyzes the reduction of ubiquinone-1 to ubiquinol by two successive reactions, coupled with the transport of Na(+) ions from the cytoplasm to the periplasm. The first step is catalyzed by NqrF, which accepts electrons from NADH and reduces ubiquinone-1 to ubisemiquinone by a one-electron transfer pathway. The sequence is that of Na(+)-translocating NADH-quinone reductase subunit F from Chlamydia trachomatis serovar D (strain ATCC VR-885 / DSM 19411 / UW-3/Cx).